We begin with the raw amino-acid sequence, 545 residues long: Aclacinomycin-N/aclacinomycin-A oxidase (545 aa).

A signal peptide (tat-type signal) is located at residues 1 to 43 (MFVLNEFTRRGFLGTAAAVGGTTVVTTALGGAPAAQAAVPEAA). An FAD-binding PCMH-type domain is found at 76–256 (FRGRPDVVYV…TRYWFRTPGA (181 aa)). A cross-link (6-(S-cysteinyl)-8alpha-(pros-histidyl)-FAD (His-Cys)) is located at residues 113 to 173 (HCFEGFVDDP…WGVTIPAGVC (61 aa)). Catalysis depends on Y421, which acts as the Proton acceptor. T451 is a binding site for aclacinomycin Y. FAD is bound at residue N492. The active-site Proton acceptor is the Y493. Aclacinomycin Y is bound at residue Y493.

Belongs to the oxygen-dependent FAD-linked oxidoreductase family. In terms of assembly, homotetramer; dimer of dimers. The cofactor is FAD. Post-translationally, predicted to be exported by the Tat system. The position of the signal peptide cleavage has been experimentally proven. The FAD cofactor is bound via a bicovalent 6-S-cysteinyl, 8alpha-N1-histidyl FAD linkage.

It carries out the reaction aclacinomycin N + O2 = aclacinomycin A + H2O2. The catalysed reaction is aclacinomycin A + O2 = aclacinomycin Y + H2O2. Its activity is regulated as follows. Inhibited by ascorbic acid and iron ion. Its function is as follows. Involved in the modification of the terminal sugar residues in the last two steps in the biosynthesis of polyketide antibiotics of the aclacinomycin group. In the first reaction, it catalyzes the oxidation of the hydroxyl group at carbon C4 of the L-rhodinose terminal sugar moiety of aclacinomycin N (AclN) to a keto group, modifying the sugar to cinerulose A and generating aclacinomycin A (AclA). In the second reaction, it catalyzes the elimination of two hydrogen atoms from cinerulose A, leading to a double bond between carbon atoms C2 and C3 and the generation of the L-aculose terminal sugar moiety of aclacinomycin Y (AclY). It can also use aclacinomycin analogs, epsilon-pyrromycinone glycosides, rhodirubins (A, B, C and E) and all triglycosides containing L-cinerulose, L-rhodinose or 2-deoxy-L-fucose as terminal sugar. The protein is Aclacinomycin-N/aclacinomycin-A oxidase of Streptomyces galilaeus.